We begin with the raw amino-acid sequence, 193 residues long: Urease accessory protein UreE (193 aa).

The disordered stretch occupies residues 138–193 (RGAYHSHGAHSHDQGHAAHDHGNEHKHDHGHDHVHGPGCDHDHDHDHGHHHDHKHD). The span at 147–193 (HSHDQGHAAHDHGNEHKHDHGHDHVHGPGCDHDHDHDHGHHHDHKHD) shows a compositional bias: basic and acidic residues.

This sequence belongs to the UreE family.

It is found in the cytoplasm. Its function is as follows. Involved in urease metallocenter assembly. Binds nickel. Probably functions as a nickel donor during metallocenter assembly. In Rhizobium leguminosarum bv. trifolii (strain WSM2304), this protein is Urease accessory protein UreE.